A 249-amino-acid polypeptide reads, in one-letter code: Flavodoxin/ferredoxin--NADP reductase (249 aa).

Residues 2 to 102 (NTWITAKIIK…KKSYGFFTLN (101 aa)) form the FAD-binding FR-type domain. FAD is bound by residues 51 to 54 (RAYS), Tyr67, 75 to 77 (QLT), and Thr117. NADP(+) is bound by residues 144-145 (VR), 174-175 (SR), Arg185, and 215-217 (NPD). FAD is bound at residue 248–249 (YW).

Belongs to the ferredoxin--NADP reductase type 1 family. It depends on FAD as a cofactor.

The protein resides in the cytoplasm. The catalysed reaction is 2 reduced [2Fe-2S]-[ferredoxin] + NADP(+) + H(+) = 2 oxidized [2Fe-2S]-[ferredoxin] + NADPH. It carries out the reaction reduced [flavodoxin] + NADP(+) = oxidized [flavodoxin] + NADPH + 2 H(+). Transports electrons between flavodoxin or ferredoxin and NADPH. The protein is Flavodoxin/ferredoxin--NADP reductase (fpr) of Buchnera aphidicola subsp. Baizongia pistaciae (strain Bp).